Consider the following 382-residue polypeptide: Mannitol-1-phosphate 5-dehydrogenase (382 aa).

Residue 3–14 coordinates NAD(+); the sequence is ALHFGAGNIGRG. N6-acetyllysine is present on Lys269.

This sequence belongs to the mannitol dehydrogenase family.

The catalysed reaction is D-mannitol 1-phosphate + NAD(+) = beta-D-fructose 6-phosphate + NADH + H(+). This Escherichia coli O127:H6 (strain E2348/69 / EPEC) protein is Mannitol-1-phosphate 5-dehydrogenase.